Reading from the N-terminus, the 843-residue chain is Transmembrane protease serine 7 (843 aa).

The Cytoplasmic portion of the chain corresponds to 1-76 (MDKENSDVSA…KVPFWNVQNK (76 aa)). The tract at residues 27 to 67 (AQKKLPVRRPPLPGRRLPLPGRRPPQRPIGKAKPKKQSKKK) is disordered. The segment covering 56-67 (GKAKPKKQSKKK) has biased composition (basic residues). The helical; Signal-anchor for type II membrane protein transmembrane segment at 77 to 97 (IILFTVFLFILAVIAWTLLWL) threads the bilayer. Residues 98–843 (YISKTESKDA…WIHKYVPSLL (746 aa)) lie on the Extracellular side of the membrane. An SEA domain is found at 106-234 (DAFYFAGMFR…DSVVLNAGLR (129 aa)). Intrachain disulfides connect cysteine 247-cysteine 273, cysteine 299-cysteine 322, cysteine 365-cysteine 396, cysteine 484-cysteine 496, cysteine 491-cysteine 509, cysteine 503-cysteine 518, cysteine 525-cysteine 544, cysteine 538-cysteine 553, cysteine 559-cysteine 571, cysteine 566-cysteine 585, cysteine 579-cysteine 594, and cysteine 631-cysteine 647. CUB domains are found at residues 247–360 (CSQY…FEVI) and 365–481 (CENT…YNIS). LDL-receptor class A domains lie at 483–519 (PCPV…LFCV), 517–554 (FCVS…QNCT), and 558–595 (PCNN…EGCT). Residues 606-840 (IIGGTDTLEG…FVPWIHKYVP (235 aa)) form the Peptidase S1 domain. Active-site charge relay system residues include histidine 646 and aspartate 694. Cystine bridges form between cysteine 730–cysteine 796 and cysteine 762–cysteine 775. Serine 790 serves as the catalytic Charge relay system.

It belongs to the peptidase S1 family. In terms of assembly, forms a heterodimer with SERPINA5. N-glycosylated. Expressed in brain, ovary, testis, salivary gland, trachea and lung.

It is found in the cell membrane. Its function is as follows. Serine protease which preferentially hydrolyzes peptides with Arg at the P1 position. The chain is Transmembrane protease serine 7 (TMPRSS7) from Homo sapiens (Human).